The primary structure comprises 174 residues: N5-carboxyaminoimidazole ribonucleotide mutase (174 aa).

Substrate-binding residues include Ser-16, Asp-19, and Arg-46.

It belongs to the AIR carboxylase family. Class I subfamily.

It carries out the reaction 5-carboxyamino-1-(5-phospho-D-ribosyl)imidazole + H(+) = 5-amino-1-(5-phospho-D-ribosyl)imidazole-4-carboxylate. It functions in the pathway purine metabolism; IMP biosynthesis via de novo pathway; 5-amino-1-(5-phospho-D-ribosyl)imidazole-4-carboxylate from 5-amino-1-(5-phospho-D-ribosyl)imidazole (N5-CAIR route): step 2/2. Functionally, catalyzes the conversion of N5-carboxyaminoimidazole ribonucleotide (N5-CAIR) to 4-carboxy-5-aminoimidazole ribonucleotide (CAIR). This is N5-carboxyaminoimidazole ribonucleotide mutase from Mycobacterium tuberculosis (strain CDC 1551 / Oshkosh).